We begin with the raw amino-acid sequence, 343 residues long: Uroporphyrinogen decarboxylase (343 aa).

Substrate-binding positions include 24–28 (RQAGR), Phe43, Asp74, Tyr151, Ser206, and His321.

Belongs to the uroporphyrinogen decarboxylase family. As to quaternary structure, homodimer.

The protein resides in the cytoplasm. It carries out the reaction uroporphyrinogen III + 4 H(+) = coproporphyrinogen III + 4 CO2. It functions in the pathway porphyrin-containing compound metabolism; protoporphyrin-IX biosynthesis; coproporphyrinogen-III from 5-aminolevulinate: step 4/4. Its function is as follows. Catalyzes the decarboxylation of four acetate groups of uroporphyrinogen-III to yield coproporphyrinogen-III. The chain is Uroporphyrinogen decarboxylase from Thermosynechococcus vestitus (strain NIES-2133 / IAM M-273 / BP-1).